A 428-amino-acid polypeptide reads, in one-letter code: Enolase (428 aa).

Glutamine 163 is a binding site for (2R)-2-phosphoglycerate. Glutamate 205 serves as the catalytic Proton donor. Aspartate 242, glutamate 286, and aspartate 313 together coordinate Mg(2+). Residues lysine 338, arginine 367, serine 368, and lysine 389 each coordinate (2R)-2-phosphoglycerate. Catalysis depends on lysine 338, which acts as the Proton acceptor.

The protein belongs to the enolase family. The cofactor is Mg(2+).

The protein resides in the cytoplasm. It is found in the secreted. It localises to the cell surface. It carries out the reaction (2R)-2-phosphoglycerate = phosphoenolpyruvate + H2O. The protein operates within carbohydrate degradation; glycolysis; pyruvate from D-glyceraldehyde 3-phosphate: step 4/5. Functionally, catalyzes the reversible conversion of 2-phosphoglycerate (2-PG) into phosphoenolpyruvate (PEP). It is essential for the degradation of carbohydrates via glycolysis. In Verminephrobacter eiseniae (strain EF01-2), this protein is Enolase.